A 36-amino-acid chain; its full sequence is F420-dependent NADP reductase (36 aa).

9 to 12 provides a ligand contact to NADP(+); it reads TGNI.

It belongs to the F420-dependent NADP reductase family. As to quaternary structure, homotetramer.

The catalysed reaction is reduced coenzyme F420-(gamma-L-Glu)(n) + NADP(+) = oxidized coenzyme F420-(gamma-L-Glu)(n) + NADPH + 2 H(+). In terms of biological role, catalyzes the reduction of NADP(+) with F420H(2) via hydride transfer, and the reverse reaction, i.e. the reduction of F420 with NADPH. In M.organophilum, an alcohol-fermenting methanogen containing an NADP-dependent alcohol dehydrogenase, is probably involved in the regeneration of F420H(2) required for CO(2) reduction to methane. Thus, during growth on alcohol and CO(2), the F420-dependent NADP reductase probably has the function of coupling the NADP-dependent oxidation of the alcohol to the aldehyde with the F420-dependent reduction of CO(2) to methane. In Methanogenium organophilum, this protein is F420-dependent NADP reductase (fno).